The sequence spans 65 residues: Neuropeptide-like protein 28 (65 aa).

An N-terminal signal peptide occupies residues 1 to 22; the sequence is MISTSSILILVFLLACFMATSA. Tyrosine amide is present on residues Tyr29, Tyr39, Tyr47, and Tyr55. The residue at position 63 (Trp63) is a Tryptophan amide.

Belongs to the YARP (YGGW-amide related peptide) family.

It is found in the secreted. May have antimicrobial activity. This Caenorhabditis elegans protein is Neuropeptide-like protein 28 (nlp-28).